A 133-amino-acid polypeptide reads, in one-letter code: Holo-[acyl-carrier-protein] synthase (133 aa).

Asp8 and Glu58 together coordinate Mg(2+).

Belongs to the P-Pant transferase superfamily. AcpS family. The cofactor is Mg(2+).

The protein resides in the cytoplasm. The enzyme catalyses apo-[ACP] + CoA = holo-[ACP] + adenosine 3',5'-bisphosphate + H(+). Its function is as follows. Transfers the 4'-phosphopantetheine moiety from coenzyme A to a Ser of acyl-carrier-protein. The sequence is that of Holo-[acyl-carrier-protein] synthase from Erythrobacter litoralis (strain HTCC2594).